Consider the following 190-residue polypeptide: MSEQEPYEWAKHLLDTKYIEKYNIQNSNTLPSPPGFEGNSSKGNVTRKQQDATSQTTSLAQKNQITVLQVQKAWQIALQPAKSIPMNIFMSYMSGTSLQIIPIMTALMLLSGPIKAIFSTRSAFKPVLGNKATQSQVQTAMFMYIVFQGVLMYIGYRKLNSMGLIPNAKGDWLPWERIAHYNNGLQWFSD.

Residues Gln25–Thr57 form a disordered region. A compositionally biased stretch (polar residues) spans Gly38–Thr57. 2 helical membrane passes run Leu98–Phe118 and Gln136–Tyr156.

This sequence belongs to the EMC4 family. In terms of assembly, component of the ER membrane protein complex (EMC), which is composed of EMC1, EMC2, EMC3, EMC4, EMC5 and EMC6.

The protein localises to the endoplasmic reticulum membrane. Its function is as follows. Part of the endoplasmic reticulum membrane protein complex (EMC) that enables the energy-independent insertion into endoplasmic reticulum membranes of newly synthesized membrane proteins. Preferentially accommodates proteins with transmembrane domains that are weakly hydrophobic or contain destabilizing features such as charged and aromatic residues. Involved in the cotranslational insertion of multi-pass membrane proteins in which stop-transfer membrane-anchor sequences become ER membrane spanning helices. It is also required for the post-translational insertion of tail-anchored/TA proteins in endoplasmic reticulum membranes. By mediating the proper cotranslational insertion of N-terminal transmembrane domains in an N-exo topology, with translocated N-terminus in the lumen of the ER, controls the topology of multi-pass membrane proteins. The chain is ER membrane protein complex subunit 4 (EMC4) from Saccharomyces cerevisiae (strain ATCC 204508 / S288c) (Baker's yeast).